Reading from the N-terminus, the 274-residue chain is Diaminopimelate epimerase (274 aa).

Residues Asn11, Gln44, and Asn64 each contribute to the substrate site. Cys73 serves as the catalytic Proton donor. Residues Gly74–Asn75, Asn157, Asn190, and Glu208–Arg209 each bind substrate. The Proton acceptor role is filled by Cys217. Gly218–Ser219 provides a ligand contact to substrate.

The protein belongs to the diaminopimelate epimerase family. Homodimer.

The protein resides in the cytoplasm. The catalysed reaction is (2S,6S)-2,6-diaminopimelate = meso-2,6-diaminopimelate. The protein operates within amino-acid biosynthesis; L-lysine biosynthesis via DAP pathway; DL-2,6-diaminopimelate from LL-2,6-diaminopimelate: step 1/1. Catalyzes the stereoinversion of LL-2,6-diaminopimelate (L,L-DAP) to meso-diaminopimelate (meso-DAP), a precursor of L-lysine and an essential component of the bacterial peptidoglycan. The chain is Diaminopimelate epimerase from Actinobacillus succinogenes (strain ATCC 55618 / DSM 22257 / CCUG 43843 / 130Z).